The chain runs to 224 residues: Peroxiredoxin-6 (224 aa).

In terms of domain architecture, Thioredoxin spans 5–169 (LLLGDVAPNF…ILRVVISLQL (165 aa)). Positions 31-40 (DSWGILFSHP) are required and sufficient for targeting to lysosomes and lamellar bodies. Thr44 is subject to Phosphothreonine. Cys47 functions as the Cysteine sulfenic acid (-SOH) intermediate; for peroxidase activity in the catalytic mechanism. Lys63 carries the post-translational modification N6-acetyllysine. Phosphotyrosine is present on Tyr89. Asp140 functions as the For phospholipase activity in the catalytic mechanism. The residue at position 177 (Thr177) is a Phosphothreonine; by MAPK. Lys209 is modified (N6-acetyllysine; alternate). Lys209 carries the N6-succinyllysine; alternate modification.

The protein belongs to the peroxiredoxin family. Prx6 subfamily. In terms of assembly, homodimer. Interacts with GSTP1; mediates PRDX6 glutathionylation and regeneration. Interacts with APEX1. Interacts with STH. May interact with FAM168B. May interact with HTR2A. Post-translationally, irreversibly inactivated by overoxidation of Cys-47 to sulfinic acid (Cys-SO(2)H) and sulfonic acid (Cys-SO(3)H) forms upon oxidative stress. In terms of processing, phosphorylation at Thr-177 by MAP kinases increases the phospholipase activity of the enzyme. The phosphorylated form exhibits a greater lysophosphatidylcholine acyltransferase activity compared to the non-phosphorylated form.

The protein resides in the cytoplasm. It is found in the lysosome. It catalyses the reaction a hydroperoxide + 2 glutathione = an alcohol + glutathione disulfide + H2O. The catalysed reaction is a 1,2-diacyl-sn-glycero-3-phosphocholine + H2O = a 1-acyl-sn-glycero-3-phosphocholine + a fatty acid + H(+). The enzyme catalyses a 1-acyl-sn-glycero-3-phosphocholine + an acyl-CoA = a 1,2-diacyl-sn-glycero-3-phosphocholine + CoA. It carries out the reaction 1-hexadecanoyl-sn-glycero-3-phosphocholine + hexadecanoyl-CoA = 1,2-dihexadecanoyl-sn-glycero-3-phosphocholine + CoA. It catalyses the reaction 1,2-dihexadecanoyl-sn-glycero-3-phosphocholine + H2O = 1-hexadecanoyl-sn-glycero-3-phosphocholine + hexadecanoate + H(+). MJ33 or lithium;[(2R)-1-hexadecoxy-3-(2,2,2-trifluoroethoxy)propan-2-yl] methyl phosphate inhibits its phospholipase A2 activity. CI-976 or 2,2-Dimethyl-N-(2,4,6-trimethoxyphenyl)dodecanamide inhibits its lysophosphatidylcholine acyltransferase activity. In terms of biological role, thiol-specific peroxidase that catalyzes the reduction of hydrogen peroxide and organic hydroperoxides to water and alcohols, respectively. Can reduce H(2)O(2) and short chain organic, fatty acid, and phospholipid hydroperoxides. Also has phospholipase activity, can therefore either reduce the oxidized sn-2 fatty acyl group of phospholipids (peroxidase activity) or hydrolyze the sn-2 ester bond of phospholipids (phospholipase activity). These activities are dependent on binding to phospholipids at acidic pH and to oxidized phospholipds at cytosolic pH. Plays a role in cell protection against oxidative stress by detoxifying peroxides and in phospholipid homeostasis. Exhibits acyl-CoA-dependent lysophospholipid acyltransferase which mediates the conversion of lysophosphatidylcholine (1-acyl-sn-glycero-3-phosphocholine or LPC) into phosphatidylcholine (1,2-diacyl-sn-glycero-3-phosphocholine or PC). Shows a clear preference for LPC as the lysophospholipid and for palmitoyl CoA as the fatty acyl substrate. The polypeptide is Peroxiredoxin-6 (PRDX6) (Homo sapiens (Human)).